We begin with the raw amino-acid sequence, 247 residues long: Myeloid leukemia factor 2 (247 aa).

Positions 122–247 (ETSEMRSAPG…PSRQSRRYDW (126 aa)) are disordered. The span at 134-144 (RETRRTVRDSD) shows a compositional bias: basic and acidic residues. A compositionally biased stretch (basic residues) spans 154–169 (HHIRDRAHILQRSRNH). The span at 170–179 (RTGDQEERQD) shows a compositional bias: basic and acidic residues. The segment covering 182–192 (NLDESEAAAFD) has biased composition (acidic residues). Basic and acidic residues predominate over residues 193-225 (DEWRRETSRYRQQRPLEFRRHEASVGGGRRAEG). Phosphoserine occurs at positions 216, 237, and 239.

The protein belongs to the MLF family.

It localises to the cytoplasm. Its subcellular location is the nucleus. The polypeptide is Myeloid leukemia factor 2 (Mlf2) (Mus musculus (Mouse)).